A 266-amino-acid chain; its full sequence is Undecaprenyl-diphosphatase (266 aa).

A run of 8 helical transmembrane segments spans residues 1 to 21, 39 to 59, 87 to 107, 114 to 134, 144 to 164, 184 to 204, 218 to 238, and 246 to 266; these read MDIFQVIVLALIQGLTEFLPI, QGLTFDVAVNTGSLLAVVIYF, WWIILATIPAVIFGFTAKDFI, IEVIATTTIVFGLLLWWADKL, VGWKKALLIGFAQAMALIPGT, AARFSFLMSVPVSLGAAILVV, ALVLGTALSFVAAYLCIHYFL, and MTPFVIYRLALGAILCVVIFA.

This sequence belongs to the UppP family.

It is found in the cell inner membrane. It catalyses the reaction di-trans,octa-cis-undecaprenyl diphosphate + H2O = di-trans,octa-cis-undecaprenyl phosphate + phosphate + H(+). Its function is as follows. Catalyzes the dephosphorylation of undecaprenyl diphosphate (UPP). Confers resistance to bacitracin. This Shewanella loihica (strain ATCC BAA-1088 / PV-4) protein is Undecaprenyl-diphosphatase.